A 273-amino-acid chain; its full sequence is Galactose-binding lectin (273 aa).

The N-terminal stretch at 1–23 (MKPFCVFLTFFLLLAASSKKVDS) is a signal peptide. The Mn(2+) site is built by Glu-144 and Asp-146. 4 residues coordinate Ca(2+): Asp-146, Tyr-148, Asn-150, and Asp-155. Asp-155 and His-160 together coordinate Mn(2+).

Belongs to the leguminous lectin family. As to quaternary structure, homotetramer.

Functionally, D-galactose specific lectin. This chain is Galactose-binding lectin, found in Arachis hypogaea (Peanut).